Here is a 218-residue protein sequence, read N- to C-terminus: Glutathione S-transferase D7 (218 aa).

In terms of domain architecture, GST N-terminal spans 1–82 (MTPVLYYLPP…YLVSAYGKDE (82 aa)). Residues S11, 52–54 (HCI), and 66–68 (ESR) contribute to the glutathione site. The region spanning 88–207 (DFRSRAIVDQ…KEINETGAET (120 aa)) is the GST C-terminal domain.

Belongs to the GST superfamily. Theta family. In terms of assembly, homodimer.

The enzyme catalyses RX + glutathione = an S-substituted glutathione + a halide anion + H(+). Conjugation of reduced glutathione to a wide number of exogenous and endogenous hydrophobic electrophiles. The polypeptide is Glutathione S-transferase D7 (Anopheles gambiae (African malaria mosquito)).